Here is a 121-residue protein sequence, read N- to C-terminus: MTNIIDQINAEQMQGKEIPDFNPGDTVLVQVKVIEGNRERLQAFEGVVIAKRNRGLNSAFTVRKISHNVGVERVFQTYSPIVDSITVKRRGDVRRAKLYYLRNLAGRAARIKEKLSGKKGD.

It belongs to the bacterial ribosomal protein bL19 family.

Its function is as follows. This protein is located at the 30S-50S ribosomal subunit interface and may play a role in the structure and function of the aminoacyl-tRNA binding site. This chain is Large ribosomal subunit protein bL19, found in Legionella pneumophila (strain Paris).